The primary structure comprises 283 residues: Dihydropteroate synthase (283 aa).

The Pterin-binding domain maps to 18–274; the sequence is PKIMGIVNLT…DVKATADALK (257 aa). N25 contacts Mg(2+). Residues T66, D99, N119, D190, K227, and 262–264 contribute to the (7,8-dihydropterin-6-yl)methyl diphosphate site; that span reads RVH.

The protein belongs to the DHPS family. In terms of assembly, homodimer. Mg(2+) serves as cofactor.

The catalysed reaction is (7,8-dihydropterin-6-yl)methyl diphosphate + 4-aminobenzoate = 7,8-dihydropteroate + diphosphate. Its pathway is cofactor biosynthesis; tetrahydrofolate biosynthesis; 7,8-dihydrofolate from 2-amino-4-hydroxy-6-hydroxymethyl-7,8-dihydropteridine diphosphate and 4-aminobenzoate: step 1/2. Catalyzes the condensation of para-aminobenzoate (pABA) with 6-hydroxymethyl-7,8-dihydropterin diphosphate (DHPt-PP) to form 7,8-dihydropteroate (H2Pte), the immediate precursor of folate derivatives. In Neisseria meningitidis serogroup C, this protein is Dihydropteroate synthase (folP).